We begin with the raw amino-acid sequence, 588 residues long: Nuclear hormone receptor family member nhr-23 (588 aa).

The disordered stretch occupies residues 50–73 (LHAKSSLQPSLSIETPKSKENDES). Positions 52–64 (AKSSLQPSLSIET) are enriched in polar residues. Positions 160-235 (VIPCKVCGDK…LGMSRDAVKF (76 aa)) form a DNA-binding region, nuclear receptor. NR C4-type zinc fingers lie at residues 163–183 (CKVC…CEGC) and 199–223 (CPRQ…LKKC). The 242-residue stretch at 345–586 (PEEDVATRVI…ALYKELFTAD (242 aa)) folds into the NR LBD domain.

It belongs to the nuclear hormone receptor family. NR1 subfamily. In terms of tissue distribution, expressed in the germline and oocytes and is a maternal gene product. In males and sperm-producing hermaphrodites, expressed in early pachytene spermatocytes, increasing in level throughout late pachytene. Expression is undetectable in meiotically dividing spermatocytes or mature spermatids.

Its subcellular location is the nucleus. Its function is as follows. Orphan nuclear receptor. Transcription factor. Modulates expression of target genes, such as Period protein homolog lin-42 and microRNA let-7, by binding to hormone response elements (HRE). Involved in promoting oscillatory expression of the primary transcripts of let-7 and paralogous microRNAs miR-48, miR-84, and miR-241. Plays a role in normal development and required to regulate each larval molt. Involved in regulating both the frequency and number of molts, acting as part of a negative feedback loop with the let-7 family of microRNAs, perhaps contributing to a self-sustaining molecular-genetic oscillator. Positively modulates expression of collagen and hedgehog-related genes. Involved in development of the gonad and associated epidermal structures. Required in spermatogenesis, acting following the sperm/oocyte cell fate decision, downstream of the canonical sex-determination pathway. Involved in regulating formation of the sperm-specific fibrous body-membranous organelle (FB-MO) complexes, acting independently of transcription regulator spe-44. The protein is Nuclear hormone receptor family member nhr-23 of Caenorhabditis elegans.